A 348-amino-acid chain; its full sequence is Dihydroorotase (348 aa).

Zn(2+) contacts are provided by His-17 and His-19. Substrate contacts are provided by residues 19-21 and Asn-45; that span reads HLR. Residues Lys-103, His-140, and His-178 each coordinate Zn(2+). Lys-103 carries the N6-carboxylysine modification. Residue His-140 coordinates substrate. Leu-223 is a substrate binding site. Residue Asp-251 participates in Zn(2+) binding. Asp-251 is an active-site residue. Substrate is bound by residues His-255 and Ala-267.

This sequence belongs to the metallo-dependent hydrolases superfamily. DHOase family. Class II DHOase subfamily. As to quaternary structure, homodimer. Requires Zn(2+) as cofactor.

It carries out the reaction (S)-dihydroorotate + H2O = N-carbamoyl-L-aspartate + H(+). The protein operates within pyrimidine metabolism; UMP biosynthesis via de novo pathway; (S)-dihydroorotate from bicarbonate: step 3/3. Its function is as follows. Catalyzes the reversible cyclization of carbamoyl aspartate to dihydroorotate. In Salmonella arizonae (strain ATCC BAA-731 / CDC346-86 / RSK2980), this protein is Dihydroorotase.